The sequence spans 20 residues: Cytochrome c oxidase subunit 5A-1, mitochondrial (20 aa).

It belongs to the cytochrome c oxidase subunit 5A family. As to quaternary structure, component of the cytochrome c oxidase (complex IV, CIV), a multisubunit enzyme composed of 14 subunits. The complex is composed of a catalytic core of 3 subunits MT-CO1, MT-CO2 and MT-CO3, encoded in the mitochondrial DNA, and 11 supernumerary subunits COX4I, COX5A, COX5B, COX6A, COX6B, COX6C, COX7A, COX7B, COX7C, COX8 and NDUFA4, which are encoded in the nuclear genome. The complex exists as a monomer or a dimer and forms supercomplexes (SCs) in the inner mitochondrial membrane with NADH-ubiquinone oxidoreductase (complex I, CI) and ubiquinol-cytochrome c oxidoreductase (cytochrome b-c1 complex, complex III, CIII), resulting in different assemblies (supercomplex SCI(1)III(2)IV(1) and megacomplex MCI(2)III(2)IV(2)). Interacts with AFG1L. Interacts with RAB5IF.

It localises to the mitochondrion inner membrane. It functions in the pathway energy metabolism; oxidative phosphorylation. Its function is as follows. Component of the cytochrome c oxidase, the last enzyme in the mitochondrial electron transport chain which drives oxidative phosphorylation. The respiratory chain contains 3 multisubunit complexes succinate dehydrogenase (complex II, CII), ubiquinol-cytochrome c oxidoreductase (cytochrome b-c1 complex, complex III, CIII) and cytochrome c oxidase (complex IV, CIV), that cooperate to transfer electrons derived from NADH and succinate to molecular oxygen, creating an electrochemical gradient over the inner membrane that drives transmembrane transport and the ATP synthase. Cytochrome c oxidase is the component of the respiratory chain that catalyzes the reduction of oxygen to water. Electrons originating from reduced cytochrome c in the intermembrane space (IMS) are transferred via the dinuclear copper A center (CU(A)) of subunit 2 and heme A of subunit 1 to the active site in subunit 1, a binuclear center (BNC) formed by heme A3 and copper B (CU(B)). The BNC reduces molecular oxygen to 2 water molecules using 4 electrons from cytochrome c in the IMS and 4 protons from the mitochondrial matrix. This is Cytochrome c oxidase subunit 5A-1, mitochondrial from Thunnus obesus (Bigeye tuna).